We begin with the raw amino-acid sequence, 403 residues long: Protein-export membrane protein SecD (403 aa).

6 helical membrane-spanning segments follow: residues 13–33 (LLVI…KGVN), 245–265 (FLKM…VIIA), 285–305 (VVFL…PALA), 306–326 (GIIL…DEIV), 347–367 (VVLA…VAGM), and 368–388 (GLLK…VVIT).

Belongs to the SecD/SecF family. SecD subfamily. Part of the protein translocation apparatus. Forms a complex with SecF.

It is found in the cell membrane. Its function is as follows. Involved in protein export. The chain is Protein-export membrane protein SecD from Methanopyrus kandleri (strain AV19 / DSM 6324 / JCM 9639 / NBRC 100938).